Consider the following 250-residue polypeptide: MADS-box protein J2 (250 aa).

One can recognise an MADS-box domain in the interval Met-1–Ser-61. Positions Thr-87–Arg-177 constitute a K-box domain.

The protein resides in the nucleus. Its function is as follows. MADS-box transcription factor that acts redundantly with EJ2 to control meristem maturation and inflorescence architecture. In Solanum lycopersicum (Tomato), this protein is MADS-box protein J2.